The chain runs to 512 residues: 2,3-bisphosphoglycerate-independent phosphoglycerate mutase (512 aa).

Residues Asp11 and Ser61 each coordinate Mn(2+). The active-site Phosphoserine intermediate is Ser61. Residues His122, Arg152–Asp153, Arg184, Arg190, Arg259–Arg262, and Lys332 each bind substrate. Mn(2+) is bound by residues Asp399, His403, Asp440, His441, and His459.

The protein belongs to the BPG-independent phosphoglycerate mutase family. In terms of assembly, monomer. Requires Mn(2+) as cofactor.

The catalysed reaction is (2R)-2-phosphoglycerate = (2R)-3-phosphoglycerate. Its pathway is carbohydrate degradation; glycolysis; pyruvate from D-glyceraldehyde 3-phosphate: step 3/5. In terms of biological role, catalyzes the interconversion of 2-phosphoglycerate and 3-phosphoglycerate. This is 2,3-bisphosphoglycerate-independent phosphoglycerate mutase from Francisella philomiragia subsp. philomiragia (strain ATCC 25017 / CCUG 19701 / FSC 153 / O#319-036).